The following is a 346-amino-acid chain: MTYALEVDGVDKSFGGATILRGVAFAVEPGSTTAIVGPSGCGKTTLLRLVAGFEKPDAGTIALAGRVVAGSGWAPAHRRSVGYVAQDGALFPHATVGANVGFGLPRRARTPARIAELLEMVSLDPSYAARRPDQLSGGQQQRVALARALAREPELMLLDEPFSALDAGLRANTRRIVADVLAKAAITTILVTHDQPEALSFADRVAVMSAGRLAQIGTPREIYSTPVDVPTAEFIGDAVVLSARVEGSRARCALGDVTVASNGVHGNARVMLRPEQIEVTTDGAGVSGTVVDVEYLGSEMLLGIRLDTGDGEVPERVTVRRFGATALTPGDRVGIRVLGKAVAYDL.

The ABC transporter domain occupies 5 to 235 (LEVDGVDKSF…PVDVPTAEFI (231 aa)). An ATP-binding site is contributed by 37 to 44 (GPSGCGKT).

It belongs to the ABC transporter superfamily. Fe(3+) ion importer (TC 3.A.1.10) family. As to quaternary structure, the complex is composed of two ATP-binding proteins (FbpC), two transmembrane proteins (FbpB) and a solute-binding protein (FbpA).

Its subcellular location is the cell membrane. It catalyses the reaction Fe(3+)(out) + ATP + H2O = Fe(3+)(in) + ADP + phosphate + H(+). Its function is as follows. Part of the ABC transporter complex FbpABC involved in Fe(3+) ions import. Responsible for energy coupling to the transport system. In Rhodococcus jostii (strain RHA1), this protein is Fe(3+) ions import ATP-binding protein FbpC 2.